A 115-amino-acid chain; its full sequence is Aspartate 1-decarboxylase (115 aa).

Residue Ser-25 is the Schiff-base intermediate with substrate; via pyruvic acid of the active site. The residue at position 25 (Ser-25) is a Pyruvic acid (Ser). Thr-57 is a binding site for substrate. The Proton donor role is filled by Tyr-58. 71 to 73 serves as a coordination point for substrate; sequence GAA.

The protein belongs to the PanD family. In terms of assembly, heterooctamer of four alpha and four beta subunits. Pyruvate is required as a cofactor. Is synthesized initially as an inactive proenzyme, which is activated by self-cleavage at a specific serine bond to produce a beta-subunit with a hydroxyl group at its C-terminus and an alpha-subunit with a pyruvoyl group at its N-terminus.

Its subcellular location is the cytoplasm. It carries out the reaction L-aspartate + H(+) = beta-alanine + CO2. The protein operates within cofactor biosynthesis; (R)-pantothenate biosynthesis; beta-alanine from L-aspartate: step 1/1. In terms of biological role, catalyzes the pyruvoyl-dependent decarboxylation of aspartate to produce beta-alanine. The polypeptide is Aspartate 1-decarboxylase (Campylobacter curvus (strain 525.92)).